Consider the following 266-residue polypeptide: UPF0294 protein YafD (266 aa).

This sequence belongs to the UPF0294 family.

Its subcellular location is the cytoplasm. The polypeptide is UPF0294 protein YafD (Salmonella dublin (strain CT_02021853)).